The following is a 171-amino-acid chain: Probable deoxyuridine 5'-triphosphate nucleotidohydrolase (171 aa).

Belongs to the dCTP deaminase family. Archaeal dUTPase subfamily.

It catalyses the reaction dUTP + H2O = dUMP + diphosphate + H(+). It functions in the pathway pyrimidine metabolism; dUMP biosynthesis; dUMP from dCTP (dUTP route): step 2/2. Functionally, this enzyme is involved in nucleotide metabolism: it produces dUMP, the immediate precursor of thymidine nucleotides and it decreases the intracellular concentration of dUTP so that uracil cannot be incorporated into DNA. This Methanosarcina mazei (strain ATCC BAA-159 / DSM 3647 / Goe1 / Go1 / JCM 11833 / OCM 88) (Methanosarcina frisia) protein is Probable deoxyuridine 5'-triphosphate nucleotidohydrolase.